We begin with the raw amino-acid sequence, 355 residues long: Peptide chain release factor 1 (355 aa).

Gln-233 carries the N5-methylglutamine modification.

The protein belongs to the prokaryotic/mitochondrial release factor family. In terms of processing, methylated by PrmC. Methylation increases the termination efficiency of RF1.

The protein localises to the cytoplasm. Peptide chain release factor 1 directs the termination of translation in response to the peptide chain termination codons UAG and UAA. The protein is Peptide chain release factor 1 of Desulforudis audaxviator (strain MP104C).